We begin with the raw amino-acid sequence, 282 residues long: Probable endonuclease 4 (282 aa).

The Zn(2+) site is built by H70, H110, E146, D180, H183, H217, D230, H232, and E262.

The protein belongs to the AP endonuclease 2 family. It depends on Zn(2+) as a cofactor.

It catalyses the reaction Endonucleolytic cleavage to 5'-phosphooligonucleotide end-products.. Functionally, endonuclease IV plays a role in DNA repair. It cleaves phosphodiester bonds at apurinic or apyrimidinic (AP) sites, generating a 3'-hydroxyl group and a 5'-terminal sugar phosphate. This Wolinella succinogenes (strain ATCC 29543 / DSM 1740 / CCUG 13145 / JCM 31913 / LMG 7466 / NCTC 11488 / FDC 602W) (Vibrio succinogenes) protein is Probable endonuclease 4.